Here is a 131-residue protein sequence, read N- to C-terminus: Small ribosomal subunit protein uS12 (131 aa).

Residue D89 is modified to 3-methylthioaspartic acid.

Belongs to the universal ribosomal protein uS12 family. In terms of assembly, part of the 30S ribosomal subunit. Contacts proteins S8 and S17. May interact with IF1 in the 30S initiation complex.

Functionally, with S4 and S5 plays an important role in translational accuracy. Interacts with and stabilizes bases of the 16S rRNA that are involved in tRNA selection in the A site and with the mRNA backbone. Located at the interface of the 30S and 50S subunits, it traverses the body of the 30S subunit contacting proteins on the other side and probably holding the rRNA structure together. The combined cluster of proteins S8, S12 and S17 appears to hold together the shoulder and platform of the 30S subunit. The protein is Small ribosomal subunit protein uS12 of Campylobacter concisus (strain 13826).